Reading from the N-terminus, the 390-residue chain is Formate-dependent phosphoribosylglycinamide formyltransferase (390 aa).

Residues glutamate 19–leucine 20 and glutamate 79 each bind N(1)-(5-phospho-beta-D-ribosyl)glycinamide. ATP contacts are provided by residues arginine 111, lysine 152, serine 157–glutamine 162, glutamate 192–valine 195, and glutamate 200. Residues arginine 116–leucine 305 form the ATP-grasp domain. Glutamate 264 and glutamate 276 together coordinate Mg(2+). Residues aspartate 283, lysine 353, and arginine 360–arginine 361 each bind N(1)-(5-phospho-beta-D-ribosyl)glycinamide.

The protein belongs to the PurK/PurT family. Homodimer.

It carries out the reaction N(1)-(5-phospho-beta-D-ribosyl)glycinamide + formate + ATP = N(2)-formyl-N(1)-(5-phospho-beta-D-ribosyl)glycinamide + ADP + phosphate + H(+). Its pathway is purine metabolism; IMP biosynthesis via de novo pathway; N(2)-formyl-N(1)-(5-phospho-D-ribosyl)glycinamide from N(1)-(5-phospho-D-ribosyl)glycinamide (formate route): step 1/1. Its function is as follows. Involved in the de novo purine biosynthesis. Catalyzes the transfer of formate to 5-phospho-ribosyl-glycinamide (GAR), producing 5-phospho-ribosyl-N-formylglycinamide (FGAR). Formate is provided by PurU via hydrolysis of 10-formyl-tetrahydrofolate. This Marinobacter nauticus (strain ATCC 700491 / DSM 11845 / VT8) (Marinobacter aquaeolei) protein is Formate-dependent phosphoribosylglycinamide formyltransferase.